The chain runs to 284 residues: Nodulation protein O (284 aa).

Residues 1-27 (MNIKGSDNGSFIKGSPENDIIDGGKKN) are disordered. Hemolysin-type calcium-binding repeat units lie at residues 13 to 30 (KGSPENDIIDGGKKNDWI), 31 to 48 (DAGNGDDRIKAGDGQDSI), 58 to 75 (WAGKGSDVIHADGGDDLL), 94 to 111 (HSGEGDDVLYAGPGSDIL), and 112 to 129 (VAGDGADVLTGGDDGDAF). Positions 100, 109, 118, and 127 each coordinate Ca(2+). An export signal (aspartic acid box) region spans residues 208-222 (DRGFASAAAAATAID).

It is found in the secreted. Its function is as follows. The NodO protein may play a role in nodule development by direct interaction with the root hair cells or some other plant surface in a calcium-dependent manner. This chain is Nodulation protein O (nodO), found in Rhizobium leguminosarum bv. viciae.